Consider the following 331-residue polypeptide: C-type lectin domain family 4 member K (331 aa).

At M1–K41 the chain is on the cytoplasmic side. Residues P42–L62 form a helical; Signal-anchor for type II membrane protein membrane-spanning segment. The Extracellular segment spans residues Q63 to E331. N-linked (GlcNAc...) asparagine glycosylation is found at N90 and N116. The stretch at D106–M197 forms a coiled coil. The C-type lectin domain maps to F205–K323. Disulfide bonds link C226/C322 and C298/C314.

Homotrimer. As to expression, expressed by Langerhans cells. Expressed in dendritic cells and by scattered cells in lymph nodes and spleen. Also detected in some non-lymphoid tissues such as lung, liver and heart.

The protein resides in the membrane. Calcium-dependent lectin displaying mannose-binding specificity. Induces the formation of Birbeck granules (BGs); is a potent regulator of membrane superimposition and zippering. Binds to sulfated as well as mannosylated glycans, keratan sulfate (KS) and beta-glucans. Facilitates uptake of antigens and is involved in the routing and/or processing of antigen for presentation to T cells. The chain is C-type lectin domain family 4 member K (Cd207) from Mus musculus (Mouse).